A 420-amino-acid polypeptide reads, in one-letter code: UDP-N-acetylglucosamine 1-carboxyvinyltransferase (420 aa).

22 to 23 contacts phosphoenolpyruvate; the sequence is KN. Arginine 93 serves as a coordination point for UDP-N-acetyl-alpha-D-glucosamine. Cysteine 117 acts as the Proton donor in catalysis. Residue cysteine 117 is modified to 2-(S-cysteinyl)pyruvic acid O-phosphothioketal. Positions 307 and 329 each coordinate UDP-N-acetyl-alpha-D-glucosamine.

Belongs to the EPSP synthase family. MurA subfamily.

The protein resides in the cytoplasm. It carries out the reaction phosphoenolpyruvate + UDP-N-acetyl-alpha-D-glucosamine = UDP-N-acetyl-3-O-(1-carboxyvinyl)-alpha-D-glucosamine + phosphate. The protein operates within cell wall biogenesis; peptidoglycan biosynthesis. In terms of biological role, cell wall formation. Adds enolpyruvyl to UDP-N-acetylglucosamine. The sequence is that of UDP-N-acetylglucosamine 1-carboxyvinyltransferase from Shewanella pealeana (strain ATCC 700345 / ANG-SQ1).